A 136-amino-acid polypeptide reads, in one-letter code: Putative pre-16S rRNA nuclease (136 aa).

Belongs to the YqgF nuclease family.

Its subcellular location is the cytoplasm. Its function is as follows. Could be a nuclease involved in processing of the 5'-end of pre-16S rRNA. This chain is Putative pre-16S rRNA nuclease, found in Francisella tularensis subsp. novicida (strain U112).